Consider the following 475-residue polypeptide: ATP synthase subunit beta (475 aa).

Residue 160–167 (GGAGVGKT) coordinates ATP.

This sequence belongs to the ATPase alpha/beta chains family. In terms of assembly, F-type ATPases have 2 components, CF(1) - the catalytic core - and CF(0) - the membrane proton channel. CF(1) has five subunits: alpha(3), beta(3), gamma(1), delta(1), epsilon(1). CF(0) has three main subunits: a(1), b(2) and c(9-12). The alpha and beta chains form an alternating ring which encloses part of the gamma chain. CF(1) is attached to CF(0) by a central stalk formed by the gamma and epsilon chains, while a peripheral stalk is formed by the delta and b chains.

The protein resides in the cell membrane. It catalyses the reaction ATP + H2O + 4 H(+)(in) = ADP + phosphate + 5 H(+)(out). In terms of biological role, produces ATP from ADP in the presence of a proton gradient across the membrane. The catalytic sites are hosted primarily by the beta subunits. In Mycolicibacterium vanbaalenii (strain DSM 7251 / JCM 13017 / BCRC 16820 / KCTC 9966 / NRRL B-24157 / PYR-1) (Mycobacterium vanbaalenii), this protein is ATP synthase subunit beta.